A 178-amino-acid polypeptide reads, in one-letter code: Large ribosomal subunit protein uL6 (178 aa).

The protein belongs to the universal ribosomal protein uL6 family. In terms of assembly, part of the 50S ribosomal subunit.

Functionally, this protein binds to the 23S rRNA, and is important in its secondary structure. It is located near the subunit interface in the base of the L7/L12 stalk, and near the tRNA binding site of the peptidyltransferase center. The polypeptide is Large ribosomal subunit protein uL6 (Ligilactobacillus salivarius (strain UCC118) (Lactobacillus salivarius)).